A 377-amino-acid chain; its full sequence is Chaperone protein DnaJ (377 aa).

In terms of domain architecture, J spans 5 to 70; it reads DYYEVLGLQK…QKRAAYDQYG (66 aa). The CR-type zinc finger occupies 134–212; that stretch reads GCKKDIRLST…CHGDGRVQKA (79 aa). Residues Cys147, Cys150, Cys164, Cys167, Cys186, Cys189, Cys200, and Cys203 each contribute to the Zn(2+) site. 4 CXXCXGXG motif repeats span residues 147-154, 164-171, 186-193, and 200-207; these read CDNCHGTG, CPHCHGAG, CPSCHGTG, and CHSCHGDG.

Belongs to the DnaJ family. In terms of assembly, homodimer. It depends on Zn(2+) as a cofactor.

Its subcellular location is the cytoplasm. Participates actively in the response to hyperosmotic and heat shock by preventing the aggregation of stress-denatured proteins and by disaggregating proteins, also in an autonomous, DnaK-independent fashion. Unfolded proteins bind initially to DnaJ; upon interaction with the DnaJ-bound protein, DnaK hydrolyzes its bound ATP, resulting in the formation of a stable complex. GrpE releases ADP from DnaK; ATP binding to DnaK triggers the release of the substrate protein, thus completing the reaction cycle. Several rounds of ATP-dependent interactions between DnaJ, DnaK and GrpE are required for fully efficient folding. Also involved, together with DnaK and GrpE, in the DNA replication of plasmids through activation of initiation proteins. This chain is Chaperone protein DnaJ, found in Haemophilus ducreyi (strain 35000HP / ATCC 700724).